The sequence spans 434 residues: Tubulin gamma chain (434 aa).

135–141 contributes to the GTP binding site; the sequence is AGGTGSG.

This sequence belongs to the tubulin family.

Its subcellular location is the cytoplasm. The protein resides in the cytoskeleton. It localises to the microtubule organizing center. It is found in the spindle pole body. In terms of biological role, tubulin is the major constituent of microtubules. The gamma chain is found at microtubule organizing centers (MTOC) such as the spindle poles or the centrosome, suggesting that it is involved in the minus-end nucleation of microtubule assembly. The sequence is that of Tubulin gamma chain (TUB4) from Encephalitozoon cuniculi (strain GB-M1) (Microsporidian parasite).